A 210-amino-acid chain; its full sequence is Large ribosomal subunit protein uL4 (210 aa).

Residues 44-54 are compositionally biased toward polar residues; it reads KRQGTASTLTR. The tract at residues 44-85 is disordered; that stretch reads KRQGTASTLTRSEVRGGGRKPYKQKGTGRARQGSIRTPLRPG. The segment covering 60–71 has biased composition (basic residues); the sequence is GGRKPYKQKGTG.

This sequence belongs to the universal ribosomal protein uL4 family. As to quaternary structure, part of the 50S ribosomal subunit.

Its function is as follows. One of the primary rRNA binding proteins, this protein initially binds near the 5'-end of the 23S rRNA. It is important during the early stages of 50S assembly. It makes multiple contacts with different domains of the 23S rRNA in the assembled 50S subunit and ribosome. Forms part of the polypeptide exit tunnel. The protein is Large ribosomal subunit protein uL4 of Prochlorococcus marinus (strain MIT 9301).